Consider the following 1436-residue polypeptide: MAP kinase kinase kinase win1 (1436 aa).

The segment at 56–85 (LELPNNGKEENHRRPSVARSSSDRSKASAK) is disordered. Residues 76-85 (SSDRSKASAK) are compositionally biased toward basic and acidic residues. Position 224 is a phosphoserine (Ser-224). Residue Thr-226 is modified to Phosphothreonine. The segment at 282 to 1123 (EDSDLDSETS…SNITIRWQQG (842 aa)) is interaction with tea4. Positions 1120 to 1406 (WQQGGLIGSG…AAELLMDPWV (287 aa)) constitute a Protein kinase domain. Residues 1126 to 1134 (IGSGSFGTV) and Lys-1149 each bind ATP. Asp-1244 (proton acceptor) is an active-site residue.

Belongs to the protein kinase superfamily. STE Ser/Thr protein kinase family. MAP kinase kinase kinase subfamily. Interacts with tea4.

It catalyses the reaction L-seryl-[protein] + ATP = O-phospho-L-seryl-[protein] + ADP + H(+). It carries out the reaction L-threonyl-[protein] + ATP = O-phospho-L-threonyl-[protein] + ADP + H(+). Functionally, involved in a signal transduction pathway that is activated by changes in the osmolarity of the extracellular environment. Activates the wis1 MAP kinase kinase by phosphorylation. The chain is MAP kinase kinase kinase win1 (win1) from Schizosaccharomyces pombe (strain 972 / ATCC 24843) (Fission yeast).